The following is a 364-amino-acid chain: MKFNEFLNHLSNYEPGKDIELIAKEYGVKEVIKLASNENPFGTPSKAIECLRQNANKAHLYPDDSMVELKSALAQKYKIQNENIIIGAGSDQVIEFAIHSKLNSKNAFLQAGVTFAMYEIYAKQCGAKCYKTQSITHNLDEFKKLYETHKDEIKLIFLCLPNNPLGECLDASEVIEFIKGVHKDCLVVIDAAYNEFASFKDSKKHLEPCELIKEFENVLYLGTFSKLYGLGGLRIGYGIANANIISAFYKLRAPFNVSNLALKAAVVAMDDDEFTKKTLENNFSQMQLYKEFAKKYDIKIIDSYTNFITYFFDEKNSTDLSEKLLKKGIIIRNLKSYGLNAIRITIGTSYENERFFTEFDKILR.

N6-(pyridoxal phosphate)lysine is present on Lys226.

This sequence belongs to the class-II pyridoxal-phosphate-dependent aminotransferase family. Histidinol-phosphate aminotransferase subfamily. As to quaternary structure, homodimer. Requires pyridoxal 5'-phosphate as cofactor.

The catalysed reaction is L-histidinol phosphate + 2-oxoglutarate = 3-(imidazol-4-yl)-2-oxopropyl phosphate + L-glutamate. Its pathway is amino-acid biosynthesis; L-histidine biosynthesis; L-histidine from 5-phospho-alpha-D-ribose 1-diphosphate: step 7/9. This is Histidinol-phosphate aminotransferase from Campylobacter jejuni subsp. doylei (strain ATCC BAA-1458 / RM4099 / 269.97).